The following is a 307-amino-acid chain: Acyl transferase (307 aa).

Active-site charge relay system residues include S116, D213, and H243.

Belongs to the LuxD family.

Its pathway is lipid metabolism; fatty acid reduction for biolumincescence. In terms of biological role, acyl transferase is part of the fatty acid reductase system required for aldehyde biosynthesis; it produces fatty acids for the luminescent reaction. This chain is Acyl transferase, found in Aliivibrio fischeri (strain MJ11) (Vibrio fischeri).